A 407-amino-acid chain; its full sequence is uncharacterized protein (407 aa).

A run of 12 helical transmembrane segments spans residues 22–42 (IVSVVSFTFICYLTIGLPLAV), 51–71 (LGFSAIVAGAAISVQYFATLA), 101–121 (ALLLSAFAFARWPAASIVLLV), 126–146 (VLGIGESLVGTGAILWGIGRV), 154–174 (VISWNGIATYGALAIGAPVGV), 179–199 (ALIPAVLGMLVIALAALGYYL), 227–247 (GLGLALGSAGFGSIATFITLY), 258–278 (LSLTVFGTLFIGARLLFANTI), 286–306 (VAIVSFAFECAGLLMLWLAPV), 309–329 (VALVGAALTGFGFALIFPALG), 347–367 (AYSVFLDLSLGITGPLAGYVA), and 369–389 (AFGYPQVFLCAAVAAAAGVAL).

This sequence belongs to the major facilitator superfamily. YhhS family.

The protein resides in the cell inner membrane. This is an uncharacterized protein from Burkholderia pseudomallei (strain 1106a).